Here is a 152-residue protein sequence, read N- to C-terminus: UPF0225 protein YchJ (152 aa).

This sequence belongs to the UPF0225 family.

The protein is UPF0225 protein YchJ of Salmonella gallinarum (strain 287/91 / NCTC 13346).